We begin with the raw amino-acid sequence, 209 residues long: Ribosomal RNA large subunit methyltransferase E (209 aa).

Residues glycine 63, tryptophan 65, aspartate 83, aspartate 99, and aspartate 124 each contribute to the S-adenosyl-L-methionine site. Lysine 164 functions as the Proton acceptor in the catalytic mechanism.

It belongs to the class I-like SAM-binding methyltransferase superfamily. RNA methyltransferase RlmE family.

Its subcellular location is the cytoplasm. The catalysed reaction is uridine(2552) in 23S rRNA + S-adenosyl-L-methionine = 2'-O-methyluridine(2552) in 23S rRNA + S-adenosyl-L-homocysteine + H(+). Functionally, specifically methylates the uridine in position 2552 of 23S rRNA at the 2'-O position of the ribose in the fully assembled 50S ribosomal subunit. This is Ribosomal RNA large subunit methyltransferase E from Shewanella pealeana (strain ATCC 700345 / ANG-SQ1).